The following is a 351-amino-acid chain: Ribonucleoside-diphosphate reductase subunit M2 B (351 aa).

Residues 1–31 (MGDPERPEAAGLDQDERSSSDTNENEIKSNE) are disordered. Residues Asp-100, Glu-131, and His-134 each contribute to the Fe cation site. The active site involves Tyr-138. Fe cation contacts are provided by Glu-194, Glu-228, and His-231.

The protein belongs to the ribonucleoside diphosphate reductase small chain family. Heterotetramer with large (RRM1) subunit. Interacts with p53/TP53. Interacts with RRM1 in response to DNA damage. Fe cation is required as a cofactor.

Its subcellular location is the cytoplasm. The protein localises to the nucleus. The catalysed reaction is a 2'-deoxyribonucleoside 5'-diphosphate + [thioredoxin]-disulfide + H2O = a ribonucleoside 5'-diphosphate + [thioredoxin]-dithiol. Plays a pivotal role in cell survival by repairing damaged DNA in a p53/TP53-dependent manner. Supplies deoxyribonucleotides for DNA repair in cells arrested at G1 or G2. Contains an iron-tyrosyl free radical center required for catalysis. Forms an active ribonucleotide reductase (RNR) complex with RRM1 which is expressed both in resting and proliferating cells in response to DNA damage. The polypeptide is Ribonucleoside-diphosphate reductase subunit M2 B (RRM2B) (Pongo abelii (Sumatran orangutan)).